A 317-amino-acid chain; its full sequence is Peroxisome biogenesis protein 7 (317 aa).

6 WD repeats span residues 58 to 98, 104 to 144, 147 to 187, 190 to 230, 234 to 274, and 278 to 317; these read DTAD…PSNP, EHAR…SVRT, EHAY…STMI, AHDF…VPLA, GHGY…ALVG, and HHTE…PRAS.

The protein belongs to the WD repeat peroxin-7 family. Interacts with PEX5; interaction only takes place when PEX7 is associated with cargo proteins. Interacts with PEX13 (via N-terminus) and PEX12 (via C-terminus), but not with PEX14. In terms of tissue distribution, expressed in siliques and leaves, but barely detectable in flowers, stems and roots.

The protein localises to the cytoplasm. It is found in the cytosol. It localises to the peroxisome matrix. In terms of biological role, receptor required for the peroxisomal import of proteins containing a C-terminal PTS2-type peroxisomal targeting signal. Specifically binds to cargo proteins containing a PTS2 peroxisomal targeting signal in the cytosol. Cargo protein-binding triggers interaction with PEX5 and formation of a ternary complex composed of PEX5 and PEX7 along with PTS2-containing cargo proteins, which is tranlocated into peroxisomes by passing through the PEX13-PEX14 docking complex. The sequence is that of Peroxisome biogenesis protein 7 (PEX7) from Arabidopsis thaliana (Mouse-ear cress).